The following is a 120-amino-acid chain: NAD(P)H-quinone oxidoreductase subunit 3, chloroplastic (120 aa).

Transmembrane regions (helical) follow at residues 7 to 27, 64 to 84, and 88 to 108; these read YDTF…AFSI, MFAL…PWAM, and ILGL…IVGL.

It belongs to the complex I subunit 3 family. NDH is composed of at least 16 different subunits, 5 of which are encoded in the nucleus.

The protein resides in the plastid. It localises to the chloroplast thylakoid membrane. The catalysed reaction is a plastoquinone + NADH + (n+1) H(+)(in) = a plastoquinol + NAD(+) + n H(+)(out). It catalyses the reaction a plastoquinone + NADPH + (n+1) H(+)(in) = a plastoquinol + NADP(+) + n H(+)(out). Functionally, NDH shuttles electrons from NAD(P)H:plastoquinone, via FMN and iron-sulfur (Fe-S) centers, to quinones in the photosynthetic chain and possibly in a chloroplast respiratory chain. The immediate electron acceptor for the enzyme in this species is believed to be plastoquinone. Couples the redox reaction to proton translocation, and thus conserves the redox energy in a proton gradient. The chain is NAD(P)H-quinone oxidoreductase subunit 3, chloroplastic from Cryptomeria japonica (Japanese cedar).